Here is a 312-residue protein sequence, read N- to C-terminus: Telomere-binding protein OPG077 (312 aa).

This sequence belongs to the orthopoxvirus OPG077 family.

The protein localises to the virion. In terms of biological role, DNA-binding protein which binds to the hairpin form of the viral telomeric sequence. Required for the production of mature virions (MV). This is Telomere-binding protein OPG077 (OPG077) from Vaccinia virus (strain L-IVP) (VACV).